The sequence spans 179 residues: Large ribosomal subunit protein uL16m (179 aa).

Belongs to the universal ribosomal protein uL16 family. As to quaternary structure, component of the mitochondrial ribosome large subunit.

The protein localises to the mitochondrion. This Arabidopsis thaliana (Mouse-ear cress) protein is Large ribosomal subunit protein uL16m (RPL16).